A 378-amino-acid polypeptide reads, in one-letter code: Pulmonary surfactant-associated protein D (378 aa).

A signal peptide spans 1 to 20 (MLLLPLSVLILLTQPPRSLG). Cys35 and Cys40 each carry S-nitrosocysteine. Residues 43–221 (MENGLPGRDG…ERGAKGESGL (179 aa)) form a disordered region. Residues 46-222 (GLPGRDGRDG…RGAKGESGLP (177 aa)) form the Collagen-like domain. Residues 50 to 65 (RDGRDGREGPRGEKGD) show a composition bias toward basic and acidic residues. 4-hydroxyproline is present on Pro78. 5-hydroxylysine is present on Lys87. N-linked (GlcNAc...) asparagine glycosylation is present at Asn90. Pro96 bears the 4-hydroxyproline mark. Lys99 carries the 5-hydroxylysine modification. Over residues 105–114 (CGPPGPPGIP) the composition is skewed to pro residues. Residues 137 to 146 (PKGETGPKGE) are compositionally biased toward low complexity. A 4-hydroxyproline mark is found at Pro171 and Pro177. Over residues 173 to 197 (ERGAPGSAGAAGPAGATGPQGPSGA) the composition is skewed to low complexity. The segment covering 204–216 (KGDRGPPGERGAK) has biased composition (basic and acidic residues). Residues 223–254 (GITALRQQVETLQGQVQRLQKAFSQYKKVELF) adopt a coiled-coil conformation. The 119-residue stretch at 260–378 (VGEKIFKTGG…GELRLVICEF (119 aa)) folds into the C-type lectin domain. 2 disulfides stabilise this stretch: Cys281-Cys376 and Cys354-Cys368. Asn323 carries N-linked (GlcNAc...) asparagine glycosylation.

This sequence belongs to the SFTPD family. In terms of assembly, oligomeric complex of 4 set of homotrimers. Hydroxylation on proline residues within the sequence motif, GXPG, is most likely to be 4-hydroxy as this fits the requirement for 4-hydroxylation in vertebrates. In terms of processing, S-nitrosylation at Cys-35 and Cys-40 alters the quaternary structure which results in a pro-inflammatory chemoattractive signaling activity with macrophages.

Its subcellular location is the secreted. The protein localises to the extracellular space. It localises to the extracellular matrix. The protein resides in the surface film. Functionally, contributes to the lung's defense against inhaled microorganisms, organic antigens and toxins. Interacts with compounds such as bacterial lipopolysaccharides, oligosaccharides and fatty acids and modulates leukocyte action in immune response. May participate in the extracellular reorganization or turnover of pulmonary surfactant. Binds strongly maltose residues and to a lesser extent other alpha-glucosyl moieties. The protein is Pulmonary surfactant-associated protein D (SFTPD) of Sus scrofa (Pig).